The following is a 363-amino-acid chain: Homeobox protein Hox-A2 (363 aa).

Disordered stretches follow at residues 23–133 (TSFP…SRRL) and 183–216 (MKHK…DEEK). Composition is skewed to polar residues over residues 31-46 (TFQS…SHST) and 55-78 (TIPS…NGTS). The Antp-type hexapeptide signature appears at 88–93 (EYPWMK). The homeobox DNA-binding region spans 130–189 (SRRLRTAYTNTQLLELEKEFHFNKYLCRPRRVEIAALLDLTERQVKVWFQNRRMKHKRQT).

The protein belongs to the Antp homeobox family. Proboscipedia subfamily.

The protein localises to the nucleus. Sequence-specific transcription factor which is part of a developmental regulatory system that provides cells with specific positional identities on the anterior-posterior axis. The sequence is that of Homeobox protein Hox-A2 (HOXA2) from Heterodontus francisci (Horn shark).